The primary structure comprises 567 residues: Laccase-7 (567 aa).

Positions M1 to A23 are cleaved as a signal peptide. Plastocyanin-like domains follow at residues N31–G147 and K157–A310. Residues N34, N50, and N77 are each glycosylated (N-linked (GlcNAc...) asparagine). H81 and H83 together coordinate Cu cation. A glycan (N-linked (GlcNAc...) asparagine) is linked at N115. The Cu cation site is built by H126 and H128. 7 N-linked (GlcNAc...) asparagine glycosylation sites follow: N186, N298, N339, N374, N386, N427, and N450. The Plastocyanin-like 3 domain occupies D412–P551. Cu cation-binding residues include H468, H471, H473, H530, C531, H532, and H536.

This sequence belongs to the multicopper oxidase family. Cu cation is required as a cofactor. As to expression, predominantly expressed in tissues other than the inflorescence stem.

Its subcellular location is the secreted. The protein localises to the extracellular space. It is found in the apoplast. It catalyses the reaction 4 hydroquinone + O2 = 4 benzosemiquinone + 2 H2O. Functionally, lignin degradation and detoxification of lignin-derived products. The chain is Laccase-7 (LAC7) from Arabidopsis thaliana (Mouse-ear cress).